The following is a 426-amino-acid chain: Ammonium transporter Rh type A (426 aa).

The Cytoplasmic portion of the chain corresponds to 1-4; sequence MRFK. Residues 5–25 traverse the membrane as a helical segment; that stretch reads FPLMAIGLEVVMIVLFALFVQ. Residues 26–54 lie on the Extracellular side of the membrane; that stretch reads YETSVNTSRNPNETESAAMDVEKTMESYP. N-linked (GlcNAc...) asparagine glycans are attached at residues Asn31 and Asn37. The chain crosses the membrane as a helical span at residues 55–75; sequence FFQDVHIMVFAGFGFLMTFLW. Topologically, residues 76 to 78 are cytoplasmic; it reads KYG. A helical membrane pass occupies residues 79 to 99; sequence FSGVGINLLIAALGLQWGTII. The Extracellular segment spans residues 100–124; the sequence is QGIFRSHGQKFLIEMKNMIHADFST. The next 2 helical transmembrane spans lie at 125-145 and 146-166; these read VTVL…QMLI and MTIL…KILW. The Extracellular portion of the chain corresponds to 167–170; sequence ASDT. The chain crosses the membrane as a helical span at residues 171 to 191; the sequence is GESMTIHAFGAYFGLAVAGIL. Residues 192–210 lie on the Cytoplasmic side of the membrane; that stretch reads YRSGLKEKHSNEESVYHSD. A helical transmembrane segment spans residues 211–231; sequence LFAMIGSLFLWIFWPSFNSAT. The Extracellular portion of the chain corresponds to 232 to 241; it reads ADEAKKQYRA. Residues 242 to 262 form a helical membrane-spanning segment; the sequence is IVNTYFSLAASVVTAYACSSL. Residues 263–270 are Cytoplasmic-facing; it reads LESRGKLN. Residues 271–288 traverse the membrane as a helical segment; sequence MVHIQNATLAGGVAVGTC. Residues 289 to 292 lie on the Extracellular side of the membrane; the sequence is ADME. The helical transmembrane segment at 293-313 threads the bilayer; sequence IPPYYAMIIGSIAGAVSVFGF. Residues 314–331 are Cytoplasmic-facing; that stretch reads KFLTPLFTTKLRIHDTCG. A helical transmembrane segment spans residues 332-352; that stretch reads VHNLHGLPGVIGGLAGIITVA. At 353 to 371 the chain is on the extracellular side; the sequence is LEESDSTKTVSQAAALGSS. The helical transmembrane segment at 372–392 threads the bilayer; sequence IATALVGGLITGAILKIPFWA. Residues 393–426 lie on the Cytoplasmic side of the membrane; the sequence is QPPDEDCYDDSVYWEVPERKEYDNHFHELLSTLH.

It belongs to the ammonium transporter (TC 2.A.49) family. Rh subfamily. Homodimer. Heterotrimer; a RHCE monomer interacts with a RHAG homodimer. Component of the ankyrin-1 complex in the erythrocyte, composed of ANK1, RHCE, RHAG, SLC4A1, EPB42, GYPA, GYPB and AQP1. Interacts with GYPB (via the N-terminal); this interaction bridges the (RHAG)2(RHCE) heterotrimer with the SLC4A1 Band 3 I dimer complexed with GYPA. Glycosylated.

Its subcellular location is the membrane. The enzyme catalyses methylamine(out) = methylamine(in). The catalysed reaction is NH4(+)(in) = NH4(+)(out). It carries out the reaction CO2(out) = CO2(in). Component of the ankyrin-1 complex, a multiprotein complex involved in the stability and shape of the erythrocyte membrane. Heterotrimer with RHCE (RHAG)2(RHCE), that transports ammonium and its related derivative methylammonium, in both neutral and ionic forms, across the erythrocyte membrane. The transport of NH4(+) is electrogenic and masks the NH3 transport. Also, may act as a CO2 channel. Moreover in erythrocyte, regulates RHD membrane expression and is associated with rhesus blood group antigen expression. In Bos taurus (Bovine), this protein is Ammonium transporter Rh type A.